The chain runs to 147 residues: Protein SprT-like (147 aa).

The SprT-like domain occupies 5–142 (DYVNEVSLED…SFCRGHLKEI (138 aa)). Residue H64 coordinates Zn(2+). Residue E65 is part of the active site. H68 contacts Zn(2+).

Belongs to the SprT family. Requires Zn(2+) as cofactor.

It localises to the cytoplasm. In Streptococcus uberis (strain ATCC BAA-854 / 0140J), this protein is Protein SprT-like.